The sequence spans 120 residues: Large ribosomal subunit protein uL18 (120 aa).

The protein belongs to the universal ribosomal protein uL18 family. Part of the 50S ribosomal subunit; part of the 5S rRNA/L5/L18 subcomplex. In B.stearothermophilus only 2 proteins, L5 and L18 have been shown to be part of this subcomplex, unlike the case in E.coli and T.thermophilus where L25 (TL5) is also found. Post-translationally, the protein, when overexpressed in E.coli, contains a phosphoserine, which is required for the protein to bind to 5S rRNA. It has been suggested, based solely on amino acid conservation, that this occurs on Ser-57.

Its function is as follows. This is one of the proteins that bind and probably mediate the attachment of the 5S RNA into the large ribosomal subunit, where it forms part of the central protuberance. This chain is Large ribosomal subunit protein uL18 (rplR), found in Geobacillus stearothermophilus (Bacillus stearothermophilus).